The chain runs to 405 residues: Arginine biosynthesis bifunctional protein ArgJ (405 aa).

Positions 152, 178, 189, 276, 400, and 405 each coordinate substrate. Catalysis depends on Thr-189, which acts as the Nucleophile.

The protein belongs to the ArgJ family. Heterotetramer of two alpha and two beta chains.

The protein localises to the cytoplasm. It carries out the reaction N(2)-acetyl-L-ornithine + L-glutamate = N-acetyl-L-glutamate + L-ornithine. It catalyses the reaction L-glutamate + acetyl-CoA = N-acetyl-L-glutamate + CoA + H(+). It participates in amino-acid biosynthesis; L-arginine biosynthesis; L-ornithine and N-acetyl-L-glutamate from L-glutamate and N(2)-acetyl-L-ornithine (cyclic): step 1/1. Its pathway is amino-acid biosynthesis; L-arginine biosynthesis; N(2)-acetyl-L-ornithine from L-glutamate: step 1/4. Functionally, catalyzes two activities which are involved in the cyclic version of arginine biosynthesis: the synthesis of N-acetylglutamate from glutamate and acetyl-CoA as the acetyl donor, and of ornithine by transacetylation between N(2)-acetylornithine and glutamate. The protein is Arginine biosynthesis bifunctional protein ArgJ of Pseudomonas savastanoi pv. phaseolicola (strain 1448A / Race 6) (Pseudomonas syringae pv. phaseolicola (strain 1448A / Race 6)).